Reading from the N-terminus, the 353-residue chain is Heterogeneous nuclear ribonucleoproteins A2/B1 (353 aa).

An N-acetylmethionine modification is found at methionine 1. A Phosphothreonine modification is found at threonine 4. The Nuclear localization signal signature appears at 9–15; the sequence is PLERKKR. RRM domains follow at residues 21 to 104 and 112 to 191; these read RKLF…ESGK and KKLF…LSRQ. Lysine 22 is covalently cross-linked (Glycyl lysine isopeptide (Lys-Gly) (interchain with G-Cter in SUMO2)). Serine 29 carries the post-translational modification Phosphoserine. An Omega-N-methylarginine modification is found at arginine 38. Serine 85 is subject to Phosphoserine. Position 104 is an N6,N6-dimethyllysine; alternate (lysine 104). Residue lysine 104 forms a Glycyl lysine isopeptide (Lys-Gly) (interchain with G-Cter in SUMO2); alternate linkage. Glycyl lysine isopeptide (Lys-Gly) (interchain with G-Cter in SUMO2) cross-links involve residues lysine 112, lysine 120, and lysine 137. Threonine 140 bears the Phosphothreonine mark. A Phosphoserine modification is found at serine 149. Residue lysine 152 forms a Glycyl lysine isopeptide (Lys-Gly) (interchain with G-Cter in SUMO2) linkage. The residue at position 159 (threonine 159) is a Phosphothreonine. Glycyl lysine isopeptide (Lys-Gly) (interchain with G-Cter in SUMO2); alternate cross-links involve residues lysine 168 and lysine 173. N6-acetyllysine; alternate is present on residues lysine 168 and lysine 173. Position 176 is a phosphothreonine (threonine 176). Lysine 186 is covalently cross-linked (Glycyl lysine isopeptide (Lys-Gly) (interchain with G-Cter in SUMO2)). 2 positions are modified to phosphoserine: serine 189 and serine 201. The disordered stretch occupies residues 193-353; that stretch reads MQEVQSSRSG…SGGYGGRSRY (161 aa). The span at 202 to 223 shows a compositional bias: gly residues; sequence GRGGNFGFGDSRGGGGNFGPGP. Arginine 203 is modified (asymmetric dimethylarginine; alternate). Arginine 203 bears the Dimethylated arginine; alternate mark. An Omega-N-methylarginine; alternate modification is found at arginine 203. At serine 212 the chain carries Phosphoserine. Arginine 213 bears the Asymmetric dimethylarginine; alternate mark. A Dimethylated arginine; alternate modification is found at arginine 213. Arginine 213 bears the Omega-N-methylarginine; alternate mark. Residue serine 225 is modified to Phosphoserine. At arginine 228 the chain carries Omega-N-methylarginine. Phosphoserine is present on residues serine 231 and serine 236. Omega-N-methylarginine is present on arginine 238. Serine 259 carries the post-translational modification Phosphoserine. Arginine 266 is subject to Asymmetric dimethylarginine; alternate. Residue arginine 266 is modified to Omega-N-methylarginine; alternate. Residues 308–347 form a nuclear targeting sequence region; the sequence is QQPSNYGPMKSGNFGGSRNMGGPYGGGNYGPGGSGGSGGY. A compositionally biased stretch (gly residues) spans 320 to 353; the sequence is NFGGSRNMGGPYGGGNYGPGGSGGSGGYGGRSRY. At serine 324 the chain carries Phosphoserine. Arginine 325 is subject to Omega-N-methylarginine. Residue tyrosine 331 is modified to Phosphotyrosine. Serine 341 and serine 344 each carry phosphoserine. A Phosphotyrosine modification is found at tyrosine 347. Arginine 350 is subject to Omega-N-methylarginine.

As to quaternary structure, identified in the spliceosome C complex. Identified in a IGF2BP1-dependent mRNP granule complex containing untranslated mRNAs. Interacts with IGF2BP1. Interacts with C9orf72. Interacts with DGCR8. Interacts with TARDBP. Interacts with CKAP5. Interacts with PPIA/CYPA. Interacts (via C-terminus) with FAM76B; the interaction results in retention of HNRNPA2B1 in the nucleus and inhibition of the NF-kappa-B-mediated inflammatory pathway. Interacts with NF-kappa-B inhibitors NFKBIA and NFKBIE; the interaction may be mediated by the RRM2 domain of HNRNPA2B1, and HNRNPA2B1 may interact simultaneously with FAM76B and either NFKBIA or NFKBIE to form a complex. Sumoylated in exosomes, promoting miRNAs-binding. In terms of processing, asymmetric dimethylation at Arg-266 constitutes the major methylation site. According to a report, methylation affects subcellular location and promotes nuclear localization. According to another report, methylation at Arg-266 does not influence nucleocytoplasmic shuttling.

It localises to the nucleus. The protein resides in the nucleoplasm. Its subcellular location is the cytoplasmic granule. The protein localises to the secreted. It is found in the extracellular exosome. In terms of biological role, heterogeneous nuclear ribonucleoprotein (hnRNP) that associates with nascent pre-mRNAs, packaging them into hnRNP particles. The hnRNP particle arrangement on nascent hnRNA is non-random and sequence-dependent and serves to condense and stabilize the transcripts and minimize tangling and knotting. Packaging plays a role in various processes such as transcription, pre-mRNA processing, RNA nuclear export, subcellular location, mRNA translation and stability of mature mRNAs. Forms hnRNP particles with at least 20 other different hnRNP and heterogeneous nuclear RNA in the nucleus. Involved in transport of specific mRNAs to the cytoplasm in oligodendrocytes and neurons: acts by specifically recognizing and binding the A2RE (21 nucleotide hnRNP A2 response element) or the A2RE11 (derivative 11 nucleotide oligonucleotide) sequence motifs present on some mRNAs, and promotes their transport to the cytoplasm. Specifically binds single-stranded telomeric DNA sequences, protecting telomeric DNA repeat against endonuclease digestion. Also binds other RNA molecules, such as primary miRNA (pri-miRNAs): acts as a nuclear 'reader' of the N6-methyladenosine (m6A) mark by specifically recognizing and binding a subset of nuclear m6A-containing pri-miRNAs. Binding to m6A-containing pri-miRNAs promotes pri-miRNA processing by enhancing binding of DGCR8 to pri-miRNA transcripts. Involved in miRNA sorting into exosomes following sumoylation, possibly by binding (m6A)-containing pre-miRNAs. Acts as a regulator of efficiency of mRNA splicing, possibly by binding to m6A-containing pre-mRNAs. Plays a role in the splicing of pyruvate kinase PKM by binding repressively to sequences flanking PKM exon 9, inhibiting exon 9 inclusion and resulting in exon 10 inclusion and production of the PKM M2 isoform. The polypeptide is Heterogeneous nuclear ribonucleoproteins A2/B1 (HNRNPA2B1) (Pongo abelii (Sumatran orangutan)).